A 491-amino-acid polypeptide reads, in one-letter code: 3-octaprenyl-4-hydroxybenzoate carboxy-lyase (491 aa).

Asn-172 provides a ligand contact to Mn(2+). Prenylated FMN-binding positions include 175-177 (IYR), 189-191 (RWL), and 194-195 (RG). Glu-238 provides a ligand contact to Mn(2+). Residue Asp-287 is the Proton donor of the active site.

It belongs to the UbiD family. Homohexamer. Requires prenylated FMN as cofactor. Mn(2+) serves as cofactor.

The protein resides in the cell membrane. The catalysed reaction is a 4-hydroxy-3-(all-trans-polyprenyl)benzoate + H(+) = a 2-(all-trans-polyprenyl)phenol + CO2. It functions in the pathway cofactor biosynthesis; ubiquinone biosynthesis. Its function is as follows. Catalyzes the decarboxylation of 3-octaprenyl-4-hydroxy benzoate to 2-octaprenylphenol, an intermediate step in ubiquinone biosynthesis. The polypeptide is 3-octaprenyl-4-hydroxybenzoate carboxy-lyase (Klebsiella pneumoniae subsp. pneumoniae (strain ATCC 700721 / MGH 78578)).